The chain runs to 58 residues: UPF0391 membrane protein ABO_0024 (58 aa).

2 helical membrane passes run 4-24 (WALT…GGIA) and 28-48 (ASIA…SLVV).

Belongs to the UPF0391 family.

Its subcellular location is the cell membrane. This Alcanivorax borkumensis (strain ATCC 700651 / DSM 11573 / NCIMB 13689 / SK2) protein is UPF0391 membrane protein ABO_0024.